The following is a 288-amino-acid chain: Oxaloacetate decarboxylase (288 aa).

Ser47 contacts substrate. Position 85 (Asp85) interacts with Mg(2+). The substrate site is built by Arg156 and His232.

Belongs to the isocitrate lyase/PEP mutase superfamily. Oxaloacetate decarboxylase family. In terms of assembly, homotetramer; dimer of dimers. The cofactor is Mg(2+).

It carries out the reaction oxaloacetate + H(+) = pyruvate + CO2. In terms of biological role, catalyzes the decarboxylation of oxaloacetate into pyruvate. Seems to play a role in maintaining cellular concentrations of bicarbonate and pyruvate. The chain is Oxaloacetate decarboxylase from Rhodopseudomonas palustris (strain ATCC BAA-98 / CGA009).